We begin with the raw amino-acid sequence, 401 residues long: Phosphoglycerate kinase (401 aa).

Substrate-binding positions include 21-23, Arg-37, 60-63, Arg-119, and Arg-152; these read DLN and HLGR. Residues Lys-203, Glu-325, and 351–354 each bind ATP; that span reads GGDT.

Belongs to the phosphoglycerate kinase family. In terms of assembly, monomer.

The protein resides in the cytoplasm. It carries out the reaction (2R)-3-phosphoglycerate + ATP = (2R)-3-phospho-glyceroyl phosphate + ADP. It functions in the pathway carbohydrate degradation; glycolysis; pyruvate from D-glyceraldehyde 3-phosphate: step 2/5. The polypeptide is Phosphoglycerate kinase (Acidithiobacillus ferrooxidans (strain ATCC 23270 / DSM 14882 / CIP 104768 / NCIMB 8455) (Ferrobacillus ferrooxidans (strain ATCC 23270))).